Consider the following 596-residue polypeptide: Aspartate--tRNA(Asp/Asn) ligase (596 aa).

E172 lines the L-aspartate pocket. The aspartate stretch occupies residues 196-199 (QLFK). R218 contacts L-aspartate. ATP contacts are provided by residues 218 to 220 (RDE) and Q227. H455 serves as a coordination point for L-aspartate. Position 489 (E489) interacts with ATP. R496 serves as a coordination point for L-aspartate. 541 to 544 (GLDR) is an ATP binding site.

Belongs to the class-II aminoacyl-tRNA synthetase family. Type 1 subfamily. Homodimer.

It localises to the cytoplasm. It catalyses the reaction tRNA(Asx) + L-aspartate + ATP = L-aspartyl-tRNA(Asx) + AMP + diphosphate. Aspartyl-tRNA synthetase with relaxed tRNA specificity since it is able to aspartylate not only its cognate tRNA(Asp) but also tRNA(Asn). Reaction proceeds in two steps: L-aspartate is first activated by ATP to form Asp-AMP and then transferred to the acceptor end of tRNA(Asp/Asn). In Bordetella avium (strain 197N), this protein is Aspartate--tRNA(Asp/Asn) ligase.